The primary structure comprises 393 residues: Cysteine protease ATG4B (393 aa).

Position 1 is an N-acetylmethionine (M1). S34 is subject to Phosphoserine. C74 acts as the Nucleophile in catalysis. C189 carries the S-nitrosocysteine modification. Residues D278 and H280 contribute to the active site. C292 and C301 each carry S-nitrosocysteine. A disulfide bridge links C292 with C361. 2 positions are modified to phosphoserine: S316 and S383. The LIR motif lies at 388-391; sequence FEIL. S392 is modified (phosphoserine).

It belongs to the peptidase C54 family. Interacts with PFKP; promoting phosphorylation of ATG4B at Ser-34. Interacts with GBP7. Phosphorylation at Ser-383 and Ser-392 promotes autophagy by increasing protein delipidation activity without affecting proteolytic activation of ATG8 proteins. Phosphorylation at Ser-316 by ULK1 inhibits autophagy by decreasing both proteolytic activation and delipidation activities. Phosphorylation at Ser-316 is dephosphorylated by protein phosphatase 2A (PP2A). Phosphorylation at Ser-34 by AKT2 promotes its hydrolase activity, leading to increased proteolytic activation and delipidation of ATG8 family proteins. Phosphorylation at Ser-34 by AKT1 promotes mitochondrial localization and inhibition of the F1F0-ATP synthase activity, leading to elevation of mitochondrial reactive oxygen species (ROS). Post-translationally, ubiquitinated by RNF5, leading to its degradation by the proteasome. In terms of processing, S-nitrosylation in response to high glucose decreases both proteolytic activation and delipidation activities. O-glycosylated by OGT, leading to increase protease activity, thereby promoting the proteolytic activation of ATG8 family proteins. Post-translationally, forms reversible intrachain disulfide bonds in response to oxidative stress. Forms interchain disulfide bonds, leading to formation of homooligomers in response to oxidation.

The protein resides in the cytoplasm. It is found in the cytosol. Its subcellular location is the cytoplasmic vesicle. It localises to the autophagosome. The protein localises to the endoplasmic reticulum. The protein resides in the mitochondrion. The enzyme catalyses [protein]-C-terminal L-amino acid-glycyl-phosphatidylethanolamide + H2O = [protein]-C-terminal L-amino acid-glycine + a 1,2-diacyl-sn-glycero-3-phosphoethanolamine. It catalyses the reaction [protein]-C-terminal L-amino acid-glycyl-phosphatidylserine + H2O = [protein]-C-terminal L-amino acid-glycine + a 1,2-diacyl-sn-glycero-3-phospho-L-serine. Inhibited by N-ethylmaleimide. Redox-regulated during autophagy since reducing conditions activate ATG4A whereas an oxidizing environment such as the presence of H(2)O(2) inhibits its activity. The cysteine protease activity compounds is inhibited by styrylquinoline compounds 4-28 and LV-320. Cysteine protease that plays a key role in autophagy by mediating both proteolytic activation and delipidation of ATG8 family proteins. Required for canonical autophagy (macroautophagy), non-canonical autophagy as well as for mitophagy. The protease activity is required for proteolytic activation of ATG8 family proteins: cleaves the C-terminal amino acid of ATG8 proteins MAP1LC3A, MAP1LC3B, MAP1LC3C, GABARAPL1, GABARAPL2 and GABARAP, to reveal a C-terminal glycine. Exposure of the glycine at the C-terminus is essential for ATG8 proteins conjugation to phosphatidylethanolamine (PE) and insertion to membranes, which is necessary for autophagy. Protease activity is also required to counteract formation of high-molecular weight conjugates of ATG8 proteins (ATG8ylation): acts as a deubiquitinating-like enzyme that removes ATG8 conjugated to other proteins, such as ATG3. In addition to the protease activity, also mediates delipidation of ATG8 family proteins. Catalyzes delipidation of PE-conjugated forms of ATG8 proteins during macroautophagy. Also involved in non-canonical autophagy, a parallel pathway involving conjugation of ATG8 proteins to single membranes at endolysosomal compartments, by catalyzing delipidation of ATG8 proteins conjugated to phosphatidylserine (PS). Compared to other members of the family (ATG4A, ATG4C or ATG4C), constitutes the major protein for proteolytic activation of ATG8 proteins, while it displays weaker delipidation activity than other ATG4 paralogs. Involved in phagophore growth during mitophagy independently of its protease activity and of ATG8 proteins: acts by regulating ATG9A trafficking to mitochondria and promoting phagophore-endoplasmic reticulum contacts during the lipid transfer phase of mitophagy. The sequence is that of Cysteine protease ATG4B from Rattus norvegicus (Rat).